A 477-amino-acid chain; its full sequence is Myc-associated zinc finger protein (477 aa).

Disordered regions lie at residues 59–78 (AQSPFQAAPAPPPTPQAPAA) and 121–146 (TVDTAALKQPPAPPPPPPPVSAPAAE). A compositionally biased stretch (pro residues) spans 130–141 (PPAPPPPPPPVS). C2H2-type zinc fingers lie at residues 190-212 (YICALCAKEFKNGYNLRRHEAIH), 279-301 (HACEMCGKAFRDVYHLNRHKLSH), 307-329 (YQCPVCQQRFKRKDRMSYHVRSH), and 337-360 (YNCSHCGKSFSRPDHLNSHVRQVH). The residue at position 361 (S361) is a Phosphoserine. A C2H2-type 5 zinc finger spans residues 366-388 (FKCEKCEAAFATKDRLRAHTVRH). The C2H2-type 6; atypical zinc-finger motif lies at 392–413 (VPCHVCGKMLSSAYISDHMKVH).

In terms of assembly, interacts with BPTF. Forms a heterodimer with MAZ isoform 2; the interaction inhibits MAZ isoform 1-mediated transcription activation. As to quaternary structure, forms a heterodimer with MAZ isoform 1; the interaction inhibits MAZ isoform 1-mediated transcription activation. Present in kidney, liver and brain. In the brain, highest levels are found in motor cortex and midfrontal cortex (at protein level). As to expression, expressed in the heart, brain, placenta, lung, liver, skeletal muscle and weakly expressed in the kidney. Expressed in the joint synovium.

It is found in the nucleus. Transcriptional regulator, potentially with dual roles in transcription initiation and termination. In terms of biological role, binds DNA and functions as a transcriptional activator. Binds to two G/A-rich sites, ME1a1 and ME1a2, within the MYC promoter having greater affinity for the former. Also binds to multiple G/C-rich sites within the promoter of the Sp1 family of transcription factors. Its function is as follows. Binds DNA and functions as a transcriptional activator. Inhibits MAZ isoform 1-mediated transcription. Functionally, binds DNA and functions as a transcriptional activator. The chain is Myc-associated zinc finger protein (MAZ) from Homo sapiens (Human).